Here is a 342-residue protein sequence, read N- to C-terminus: TMELLEDLIEQVRQLPMVNFIEKNSLVHANEFTVAKGAPWGLARISHRDPLSLGSFDQYLYDSNGGTGVTSYVIDTGVNVHHEQFEGRAKWGKTIPQGDEDEDGNGHGTHCAGTIGSNAYGVAKNAEIVAVKVLRSNGSGSMSDVIKGVEFAVKSHQDSVKKGKNSFSTANMSLGGGKSPALDLAVNAAVKAGLHFAVAAGNENQDACNTSPASAENAITVGASTISDARAYFSNYGKCVDIFAPGLNILSTYIGSDAATAYLSGTSMASPHIAGLLTYYLSLQPSSDSEFFIGAEGITPAQLKKNLIAFGTPDVLADIPADTPNILAFNGAGQNLTKFWGH.

A propeptide spans 1 to 30 (removed in mature form); the sequence is TMELLEDLIEQVRQLPMVNFIEKNSLVHAN. An Inhibitor I9 domain is found at 1-30; the sequence is TMELLEDLIEQVRQLPMVNFIEKNSLVHAN. The Peptidase S8 domain occupies 39–342; sequence PWGLARISHR…GQNLTKFWGH (304 aa). Active-site charge relay system residues include aspartate 75 and histidine 107. Residues asparagine 137 and asparagine 171 are each glycosylated (N-linked (GlcNAc...) asparagine). The active-site Charge relay system is the serine 267. An N-linked (GlcNAc...) asparagine glycan is attached at asparagine 335.

Belongs to the peptidase S8 family.

Serine protease. This Rhodotorula mucilaginosa (Yeast) protein is Subtilisin-like serine protease Rho m 2.0101.